The primary structure comprises 371 residues: Vasopressin V2 receptor (371 aa).

Residues methionine 1 to glutamate 27 are disordered. Topologically, residues methionine 1–arginine 38 are extracellular. The span at serine 15 to serine 24 shows a compositional bias: low complexity. Asparagine 22 is a glycosylation site (N-linked (GlcNAc...) asparagine). The helical transmembrane segment at alanine 39–isoleucine 63 threads the bilayer. Residues arginine 64 to phenylalanine 77 lie on the Cytoplasmic side of the membrane. Residues isoleucine 78 to alanine 98 traverse the membrane as a helical segment. Residues tryptophan 99–arginine 113 lie on the Extracellular side of the membrane. Residues alanine 114 to leucine 135 form a helical membrane-spanning segment. The Cytoplasmic portion of the chain corresponds to aspartate 136–proline 159. The chain crosses the membrane as a helical span at residues valine 160–glutamine 180. The Extracellular portion of the chain corresponds to arginine 181–tryptophan 200. Asparagine 185 carries N-linked (GlcNAc...) asparagine glycosylation. The helical transmembrane segment at glycine 201 to glycine 220 threads the bilayer. Residues isoleucine 221–arginine 271 lie on the Cytoplasmic side of the membrane. The segment at proline 240 to glycine 259 is disordered. Residues methionine 272 to tryptophan 293 form a helical membrane-spanning segment. The Extracellular segment spans residues alanine 294–valine 308. The chain crosses the membrane as a helical span at residues leucine 309–phenylalanine 328. The Cytoplasmic segment spans residues serine 329 to serine 371. 2 S-palmitoyl cysteine lipidation sites follow: cysteine 341 and cysteine 342. The segment at histidine 349–serine 371 is disordered. A compositionally biased stretch (polar residues) spans serine 357–serine 371.

The protein belongs to the G-protein coupled receptor 1 family. Vasopressin/oxytocin receptor subfamily. As to quaternary structure, interacts with ARRDC4. Identified in a complex containing at least ARRDC4, V2R and HGS. Interacts with TMEM147. As to expression, highly expressed in kidney (at protein level) and moderately expressed in liver (at protein level). No or extremely low expression in left ventricule, muscle, bone and brain (at protein level).

The protein resides in the cell membrane. Its function is as follows. Receptor for arginine vasopressin. The activity of this receptor is mediated by G proteins which activate adenylate cyclase. Involved in renal water reabsorption. This Mus musculus (Mouse) protein is Vasopressin V2 receptor (Avpr2).